Consider the following 606-residue polypeptide: Isocitrate dehydrogenase kinase/phosphatase (606 aa).

ATP-binding positions include 354-360 and lysine 375; that span reads APGFKGT. Aspartate 414 is a catalytic residue.

The protein belongs to the AceK family.

The protein localises to the cytoplasm. The catalysed reaction is L-seryl-[isocitrate dehydrogenase] + ATP = O-phospho-L-seryl-[isocitrate dehydrogenase] + ADP + H(+). Bifunctional enzyme which can phosphorylate or dephosphorylate isocitrate dehydrogenase (IDH) on a specific serine residue. This is a regulatory mechanism which enables bacteria to bypass the Krebs cycle via the glyoxylate shunt in response to the source of carbon. When bacteria are grown on glucose, IDH is fully active and unphosphorylated, but when grown on acetate or ethanol, the activity of IDH declines drastically concomitant with its phosphorylation. The chain is Isocitrate dehydrogenase kinase/phosphatase from Rhodopseudomonas palustris (strain BisB5).